A 307-amino-acid polypeptide reads, in one-letter code: tRNA pseudouridine synthase B (307 aa).

Catalysis depends on aspartate 38, which acts as the Nucleophile.

It belongs to the pseudouridine synthase TruB family. Type 1 subfamily.

The catalysed reaction is uridine(55) in tRNA = pseudouridine(55) in tRNA. In terms of biological role, responsible for synthesis of pseudouridine from uracil-55 in the psi GC loop of transfer RNAs. In Bacillus cytotoxicus (strain DSM 22905 / CIP 110041 / 391-98 / NVH 391-98), this protein is tRNA pseudouridine synthase B.